The following is a 131-amino-acid chain: Global transcriptional regulator Spx (131 aa).

The CXXC motif lies at 10 to 13 (CTSC). A disulfide bridge connects residues Cys-10 and Cys-13.

The protein belongs to the ArsC family. Spx subfamily. As to quaternary structure, interacts with the C-terminal domain of the alpha subunit of the RNAP. A single Spx monomer interacts with RNAP to form the transcription activation complex. Interacts with the adapter protein SpxH/YjbH.

Its subcellular location is the cytoplasm. Under non-stress conditions, Spx is degraded by ClpXP and, to a lesser extent, by ClpCP. Efficient dedradation by ClpXP requires the adapter protein SpxH/YjbH. Binding to SpxH/YjbH reduces the overall conformational flexibility of Spx and stabilizes the C-terminal ClpX recognition region of Spx. In addition, activity is modulated by the formation of a disulfide bound within the N-terminal Cys-X-X-Cys (CXXC) motif, which is required for the transcriptional activation of trxA and trxB, or for the activation of msrAB operon expression following paraquat oxidative stress. However, it seems that formation of the disulfide bound is not essential for induction of all Spx-controlled genes, as for example the case of BSH biosynthesis genes. Similarly, induction of the Spx regulon during cell wall stress is not accompanied by oxidation of the disulfide switch, but requires Spx stabilization by the anti-adapter protein SpxO/YirB. Functionally, global transcriptional regulator that plays a key role in stress response and exerts either positive or negative regulation of genes. Acts by interacting with the C-terminal domain of the alpha subunit of the RNA polymerase (RNAP). This interaction can enhance binding of RNAP to the promoter region of target genes and stimulate their transcription, or block interaction of RNAP with activator proteins and repress transcription. Exhibits no DNA-binding activity. Induces the expression of a large number of genes in response to a variety of stress conditions, such as disulfide, heat and cell wall stress, while concurrently repressing transcription of genes involved in various developmental and growth-related pathways during periods of extreme stress. Functions in the oxidative stress response via induction of the transcription of thioredoxin (trxA) and thioredoxin reductase (trxB) during thiol-specific oxidative (disulfide) stress. Mediates response to oxidative stress caused by paraquat (PQ) via induction of the methionine sulfoxide reductase genes, msrA and msrB. Also acts as a transcriptional activator of the bacillithiol (BSH) biosynthesis genes in response to oxidizing conditions and thio-reactive compounds. Involved in heat stress response and thermotolerance development, which results in diminished cellular protein aggregates. Plays an important adaptive role in the cell wall stress response. Participates in sulfate-dependent control of organosulfur metabolism. Negatively controls, via CymR, the expression of the organosulfur utilization operons ytmI, yxeI and ssu, and directly activates yrrT operon expression during growth in medium containing methionine as sole sulfur source. Negatively affects competence and sporulation. Inhibits biofilm formation in response to disulfide stress by repressing biofilm matrix genes. In Bacillus subtilis (strain 168), this protein is Global transcriptional regulator Spx.